A 356-amino-acid chain; its full sequence is Glutamine synthetase PR-2 (356 aa).

The GS beta-grasp domain maps to 19–99 (IIAEYIWVGG…VICDVYTPAG (81 aa)). The interval 37–66 (ARTLPGPVDDPAKLPKWNYDGSSTDQAPGD) is disordered. A GS catalytic domain is found at 106 to 356 (KRYDAAKIFS…IAETTILWKP (251 aa)).

It belongs to the glutamine synthetase family. As to quaternary structure, homooctamer. Roots.

It is found in the cytoplasm. It catalyses the reaction L-glutamate + NH4(+) + ATP = L-glutamine + ADP + phosphate + H(+). This Phaseolus vulgaris (Kidney bean) protein is Glutamine synthetase PR-2.